The following is a 263-amino-acid chain: Oxidoreductase UcpA (263 aa).

10–32 (LITGALQGIGEGIARTFARHGAN) is a binding site for NAD(+). S141 is a substrate binding site. The active-site Proton acceptor is the Y155.

Belongs to the short-chain dehydrogenases/reductases (SDR) family.

This is Oxidoreductase UcpA (ucpA) from Escherichia coli O157:H7.